A 653-amino-acid chain; its full sequence is tRNA-guanine(15) transglycosylase (653 aa).

Residue D91 is the Nucleophile of the active site. D126 and A193 together coordinate substrate. C276, C278, and C281 together coordinate Zn(2+). The region spanning 578–653 is the PUA domain; it reads AWRVAVNEES…QAVKTRKGGF (76 aa).

This sequence belongs to the archaeosine tRNA-ribosyltransferase family. Zn(2+) serves as cofactor.

It catalyses the reaction guanosine(15) in tRNA + 7-cyano-7-deazaguanine = 7-cyano-7-carbaguanosine(15) in tRNA + guanine. The protein operates within tRNA modification; archaeosine-tRNA biosynthesis. Its function is as follows. Exchanges the guanine residue with 7-cyano-7-deazaguanine (preQ0) at position 15 in the dihydrouridine loop (D-loop) of archaeal tRNAs. The polypeptide is tRNA-guanine(15) transglycosylase (Methanothermobacter thermautotrophicus (strain ATCC 29096 / DSM 1053 / JCM 10044 / NBRC 100330 / Delta H) (Methanobacterium thermoautotrophicum)).